Consider the following 450-residue polypeptide: C4-dicarboxylate transport protein (450 aa).

8 helical membrane-spanning segments follow: residues Val25–Ala45, Leu56–Met76, Met90–Val110, Ile162–Ala182, Leu200–Ile220, Leu234–Ala254, Ile319–Gly339, and Ala367–Val387.

Belongs to the dicarboxylate/amino acid:cation symporter (DAACS) (TC 2.A.23) family.

The protein resides in the cell inner membrane. In terms of biological role, responsible for the transport of dicarboxylates such as succinate, fumarate, and malate from the periplasm across the membrane. In Acidovorax ebreus (strain TPSY) (Diaphorobacter sp. (strain TPSY)), this protein is C4-dicarboxylate transport protein.